Here is a 393-residue protein sequence, read N- to C-terminus: Nuclear hormone receptor family member nhr-90 (393 aa).

The segment at residues 6–79 (LQTCKICGAE…AGMKIEYFQH (74 aa)) is a DNA-binding region (nuclear receptor). The NR C4-type zinc-finger motif lies at 9–30 (CKICGAENTRGNHFGVQCCRAC). The NR C4-type; degenerate zinc-finger motif lies at 47–62 (CLSVHCGEAARFCKPC). The 268-residue stretch at 121-388 (DLNSLVGKAS…FSHPEMFIDT (268 aa)) folds into the NR LBD domain.

Belongs to the nuclear hormone receptor family.

It localises to the nucleus. In terms of biological role, orphan nuclear receptor. The chain is Nuclear hormone receptor family member nhr-90 (nhr-90) from Caenorhabditis elegans.